Consider the following 191-residue polypeptide: UPF0312 protein Sputw3181_1309 (191 aa).

The N-terminal stretch at 1–22 is a signal peptide; it reads MKKQLLSALIGVSLLVPMAASA.

This sequence belongs to the UPF0312 family. Type 1 subfamily.

Its subcellular location is the periplasm. The chain is UPF0312 protein Sputw3181_1309 from Shewanella sp. (strain W3-18-1).